We begin with the raw amino-acid sequence, 167 residues long: NAD(P)H-quinone oxidoreductase subunit I, chloroplastic (167 aa).

2 consecutive 4Fe-4S ferredoxin-type domains span residues 55–84 (GRIH…VDWK) and 95–124 (LNYS…MTEE). [4Fe-4S] cluster-binding residues include C64, C67, C70, C74, C104, C107, C110, and C114.

It belongs to the complex I 23 kDa subunit family. In terms of assembly, NDH is composed of at least 16 different subunits, 5 of which are encoded in the nucleus. Requires [4Fe-4S] cluster as cofactor.

It localises to the plastid. Its subcellular location is the chloroplast thylakoid membrane. It carries out the reaction a plastoquinone + NADH + (n+1) H(+)(in) = a plastoquinol + NAD(+) + n H(+)(out). The enzyme catalyses a plastoquinone + NADPH + (n+1) H(+)(in) = a plastoquinol + NADP(+) + n H(+)(out). Its function is as follows. NDH shuttles electrons from NAD(P)H:plastoquinone, via FMN and iron-sulfur (Fe-S) centers, to quinones in the photosynthetic chain and possibly in a chloroplast respiratory chain. The immediate electron acceptor for the enzyme in this species is believed to be plastoquinone. Couples the redox reaction to proton translocation, and thus conserves the redox energy in a proton gradient. This chain is NAD(P)H-quinone oxidoreductase subunit I, chloroplastic, found in Morus indica (Mulberry).